The sequence spans 210 residues: Probable GTP-binding protein EngB (210 aa).

The region spanning 30–204 (QGYEVAFAGR…YKVLAGWMEL (175 aa)) is the EngB-type G domain. Residues 38–45 (GRSNAGKS), 64–68 (GRTQL), 82–85 (DLPG), 149–152 (TKAD), and 182–185 (LFSA) contribute to the GTP site. S45 and T66 together coordinate Mg(2+).

Belongs to the TRAFAC class TrmE-Era-EngA-EngB-Septin-like GTPase superfamily. EngB GTPase family. Mg(2+) serves as cofactor.

Functionally, necessary for normal cell division and for the maintenance of normal septation. The sequence is that of Probable GTP-binding protein EngB from Pseudomonas putida (strain W619).